Reading from the N-terminus, the 422-residue chain is UDP-N-acetylglucosamine 1-carboxyvinyltransferase (422 aa).

A phosphoenolpyruvate-binding site is contributed by 22–23; it reads KN. Arg-94 contacts UDP-N-acetyl-alpha-D-glucosamine. The Proton donor role is filled by Cys-118. 2-(S-cysteinyl)pyruvic acid O-phosphothioketal is present on Cys-118. UDP-N-acetyl-alpha-D-glucosamine is bound by residues 123 to 127, Asp-309, and Ile-331; that span reads RPVDL.

It belongs to the EPSP synthase family. MurA subfamily.

The protein localises to the cytoplasm. It catalyses the reaction phosphoenolpyruvate + UDP-N-acetyl-alpha-D-glucosamine = UDP-N-acetyl-3-O-(1-carboxyvinyl)-alpha-D-glucosamine + phosphate. Its pathway is cell wall biogenesis; peptidoglycan biosynthesis. Functionally, cell wall formation. Adds enolpyruvyl to UDP-N-acetylglucosamine. This chain is UDP-N-acetylglucosamine 1-carboxyvinyltransferase, found in Cereibacter sphaeroides (strain ATCC 17029 / ATH 2.4.9) (Rhodobacter sphaeroides).